Consider the following 151-residue polypeptide: High mobility group B protein 14 (151 aa).

Disordered stretches follow at residues 1–62 (MTKR…QTKM) and 132–151 (TKRMESGAHDESETDSDYSE). Residues 7–20 (KSGPLSPSCSGGSS) show a composition bias toward low complexity. Over residues 35–56 (RSTRLRLQPLRKPKTSPKKKPV) the composition is skewed to basic residues. The segment at residues 63–132 (PKKPATAFFF…EFHRAMTEYT (70 aa)) is a DNA-binding region (HMG box). Residues 132-142 (TKRMESGAHDE) are compositionally biased toward basic and acidic residues. Phosphoserine is present on Ser-150.

It belongs to the HMGB family.

The protein localises to the nucleus. In Arabidopsis thaliana (Mouse-ear cress), this protein is High mobility group B protein 14 (HMGB14).